The following is an 874-amino-acid chain: Alanine--tRNA ligase (874 aa).

Zn(2+)-binding residues include His-562, His-566, Cys-665, and His-669.

It belongs to the class-II aminoacyl-tRNA synthetase family. Zn(2+) is required as a cofactor.

It is found in the cytoplasm. It carries out the reaction tRNA(Ala) + L-alanine + ATP = L-alanyl-tRNA(Ala) + AMP + diphosphate. In terms of biological role, catalyzes the attachment of alanine to tRNA(Ala) in a two-step reaction: alanine is first activated by ATP to form Ala-AMP and then transferred to the acceptor end of tRNA(Ala). Also edits incorrectly charged Ser-tRNA(Ala) and Gly-tRNA(Ala) via its editing domain. This chain is Alanine--tRNA ligase, found in Pseudomonas paraeruginosa (strain DSM 24068 / PA7) (Pseudomonas aeruginosa (strain PA7)).